The following is a 154-amino-acid chain: SKP1-like protein 13 (154 aa).

The interaction with the F-box domain of F-box proteins stretch occupies residues 96–154 (MLAANYLNIKDLLDLGCQTVADMITGKKPDEIRALLGIENDFTPEEEEEIRKENQWAFE).

It belongs to the SKP1 family. In terms of assembly, part of a SCF (SKP1-cullin-F-box) protein ligase complex. Interacts with ADO3/FKF1, EBF1, PP2A13, SKIP15, SKIP16, CPR1/CPR30, At1g55000, At3g61590, At1g67340, At1g78100, At3g04660, At4g38940, At4g39550 and At5g49610. As to expression, mostly expressed in inflorescences, and, to a lower extent, in seedlings and siliques. Also detected in cotyledons, leaves, pollen and seeds.

Its subcellular location is the nucleus. It participates in protein modification; protein ubiquitination. Its function is as follows. Involved in ubiquitination and subsequent proteasomal degradation of target proteins. Together with CUL1, RBX1 and a F-box protein, it forms a SCF E3 ubiquitin ligase complex. The functional specificity of this complex depends on the type of F-box protein. In the SCF complex, it serves as an adapter that links the F-box protein to CUL1. This is SKP1-like protein 13 (ASK13) from Arabidopsis thaliana (Mouse-ear cress).